Reading from the N-terminus, the 202-residue chain is LexA repressor (202 aa).

Residues 28–47 (IREIGDQFGITAKGAYDHLK) constitute a DNA-binding region (H-T-H motif). Residues Ser126 and Lys163 each act as for autocatalytic cleavage activity in the active site.

The protein belongs to the peptidase S24 family. Homodimer.

It catalyses the reaction Hydrolysis of Ala-|-Gly bond in repressor LexA.. Functionally, represses a number of genes involved in the response to DNA damage (SOS response), including recA and lexA. In the presence of single-stranded DNA, RecA interacts with LexA causing an autocatalytic cleavage which disrupts the DNA-binding part of LexA, leading to derepression of the SOS regulon and eventually DNA repair. This chain is LexA repressor, found in Leptospira biflexa serovar Patoc (strain Patoc 1 / Ames).